The chain runs to 279 residues: Fatty acid elongase 2 (279 aa).

Transmembrane regions (helical) follow at residues 16-36 (LMLENVDVLGYLSLGYLALVW), 61-81 (AIIVWNLLLSAFSFFGMIVVV), 112-132 (FWIGMFVLSKAPELVDTMFLL), 138-158 (PPFLHWYHHVTVLIFSWHTYC), 164-184 (MVLFAAMNLTVHFIMYFYFAM), 196-216 (FAPFITMLQILQMVVGSLVTT), and 242-262 (MGVIMYMSYLYLFSEMFLNSY). The short motif at 142-146 (HWYHH) is the HxxHH motif element. His145 serves as the catalytic Nucleophile.

Belongs to the ELO family.

It localises to the endoplasmic reticulum membrane. It catalyses the reaction an acyl-CoA + malonyl-CoA + H(+) = a 3-oxoacyl-CoA + CO2 + CoA. The protein operates within lipid metabolism; fatty acid biosynthesis. Involved in the synthesis of fatty acids. Elongates C10 fatty acids to C14. Required for the maintenance of the global lipidome profile in this parasite. The protein is Fatty acid elongase 2 of Trypanosoma cruzi (strain CL Brener).